A 240-amino-acid polypeptide reads, in one-letter code: Orotidine 5'-phosphate decarboxylase (240 aa).

Residues Asp19, Lys41, 68–77 (DYKYYDIEET), Thr123, Arg184, Gln193, Gly213, and Arg214 contribute to the substrate site. The active-site Proton donor is Lys70.

Belongs to the OMP decarboxylase family. Type 1 subfamily. In terms of assembly, homodimer.

It catalyses the reaction orotidine 5'-phosphate + H(+) = UMP + CO2. The protein operates within pyrimidine metabolism; UMP biosynthesis via de novo pathway; UMP from orotate: step 2/2. In terms of biological role, catalyzes the decarboxylation of orotidine 5'-monophosphate (OMP) to uridine 5'-monophosphate (UMP). The polypeptide is Orotidine 5'-phosphate decarboxylase (Nitrobacter winogradskyi (strain ATCC 25391 / DSM 10237 / CIP 104748 / NCIMB 11846 / Nb-255)).